We begin with the raw amino-acid sequence, 141 residues long: Large ribosomal subunit protein uL16 (141 aa).

It belongs to the universal ribosomal protein uL16 family. As to quaternary structure, part of the 50S ribosomal subunit.

Its function is as follows. Binds 23S rRNA and is also seen to make contacts with the A and possibly P site tRNAs. The chain is Large ribosomal subunit protein uL16 from Campylobacter fetus subsp. fetus (strain 82-40).